The following is a 705-amino-acid chain: Translation initiation factor IF-2 (705 aa).

The segment at 40 to 124 (DDQIKALDKK…QPAAPKEIPS (85 aa)) is disordered. Residues 41 to 58 (DQIKALDKKFKKEQKNDN) show a composition bias toward basic and acidic residues. The span at 59 to 77 (KQSTQNNHQKSNNQNQNKG) shows a compositional bias: low complexity. Over residues 94 to 108 (KGNKKNNRNNKKNNK) the composition is skewed to basic residues. Positions 207 to 376 (ERPAVVTIMG…GLVAEVQELK (170 aa)) constitute a tr-type G domain. Positions 216 to 223 (GHVDHGKT) are G1. 216-223 (GHVDHGKT) lines the GTP pocket. The G2 stretch occupies residues 241-245 (GITQH). The G3 stretch occupies residues 262–265 (DTPG). GTP is bound by residues 262–266 (DTPGH) and 316–319 (NKID). Positions 316-319 (NKID) are G4. Residues 352 to 354 (SAL) form a G5 region.

Belongs to the TRAFAC class translation factor GTPase superfamily. Classic translation factor GTPase family. IF-2 subfamily.

It is found in the cytoplasm. Functionally, one of the essential components for the initiation of protein synthesis. Protects formylmethionyl-tRNA from spontaneous hydrolysis and promotes its binding to the 30S ribosomal subunits. Also involved in the hydrolysis of GTP during the formation of the 70S ribosomal complex. This Staphylococcus aureus (strain Mu3 / ATCC 700698) protein is Translation initiation factor IF-2.